Reading from the N-terminus, the 64-residue chain is Disintegrin (64 aa).

Residues 1-64 (NSVHPCCDPV…SDCPRNRYNH (64 aa)) form the Disintegrin domain. Intrachain disulfides connect Cys-6–Cys-29, Cys-20–Cys-26, Cys-25–Cys-50, and Cys-38–Cys-57. A Cell attachment site; atypical (MLD) motif is present at residues 42-44 (MLD).

It belongs to the disintegrin family. Dimeric disintegrin subfamily. In terms of assembly, heterodimer; disulfide-linked. Expressed by the venom gland.

It is found in the secreted. Inhibits adhesion of cells expressing alpha-4/beta-1 (ITGA4/ITGB1) and alpha-4/beta-7 (ITGA4/ITGB7) integrins to the natural ligands vascular cell adhesion molecule 1 (VCAM-1) and mucosal addressin cell adhesion molecule 1 (MADCAM-1). The chain is Disintegrin from Echis carinatus (Saw-scaled viper).